Reading from the N-terminus, the 188-residue chain is Probable RNA-binding protein 18 (188 aa).

The RRM domain maps to 23–104 (HRLWIGNIDP…KKLVVRWAHA (82 aa)). The tract at residues 151-188 (EENPDDYSGPSAYTYNKPPDKREKRSQPYHKHFRKHRR) is disordered. Residues 177-188 (QPYHKHFRKHRR) are compositionally biased toward basic residues.

This Danio rerio (Zebrafish) protein is Probable RNA-binding protein 18 (rbm18).